The sequence spans 241 residues: Endothelial protein C receptor (241 aa).

Positions 1–17 (MLTTLLPLLPLLLPGWA) are cleaved as a signal peptide. The Extracellular portion of the chain corresponds to 18-212 (LCSQEASDGP…GSQTGRSYTS (195 aa)). Residues Asn49, Asn66, Asn138, and Asn174 are each glycosylated (N-linked (GlcNAc...) asparagine). 2 cysteine pairs are disulfide-bonded: Cys120–Cys188 and Cys221–Cys234. Residues 213–233 (LVLGVLVGCFIVTGVAVGIFL) traverse the membrane as a helical segment. Residues 234–241 (CTGGRRRC) lie on the Cytoplasmic side of the membrane.

In terms of tissue distribution, expressed in endothelial cells.

The protein resides in the membrane. Functionally, binds activated protein C. Enhances protein C activation by the thrombin-thrombomodulin complex; plays a role in the protein C pathway controlling blood coagulation. This chain is Endothelial protein C receptor (PROCR), found in Bos taurus (Bovine).